The chain runs to 311 residues: MLRTTVRTLRQRAFFHRSFVHVNLPELHSAIQDAQTTCYCQSINARLPSTTDPLDPQIKLPHRTPNYNKHVLLVSPGDKLAQPWKIAWNHNLDTNLNRPYNAIGKLRSYLRNSPGILINAVHLQNEFVPRPKEGDKWLFFFVIPDMKLYKIRETDLEEFASFLDEGVVQAPRLSFQDYLIGKAKVPQETQQVHHKNLTKFQGDIFLRDWSLVCGHYKRDAKCGEMGPDIIAAFQDEKLLTDNNLGLISHVGGHVFAGNVIFYKLFKAENALNKLDSLWFGKVYPHNLKLLCENLENGKIIDEMYRGGISMN.

This sequence belongs to the AIM32 family.

The protein is Altered inheritance of mitochondria protein 32 (AIM32) of Saccharomyces kudriavzevii (strain ATCC MYA-4449 / AS 2.2408 / CBS 8840 / NBRC 1802 / NCYC 2889) (Yeast).